Consider the following 147-residue polypeptide: Biogenesis of lysosome-related organelles complex 1 subunit 1 (147 aa).

2 disordered regions span residues methionine 1–lysine 25 and serine 125–threonine 147.

The protein belongs to the BLOC1S1 family. Component of the biogenesis of lysosome-related organelles complex-1 (BLOC-1) composed of Blos1, Blos2, Blos3, Blos4, Dysb, Muted, Pldn and Snapin. Interacts with Pldn.

Functionally, component of the biogenesis of lysosome-related organelles complex-1 (BLOC-1) involved in pigment granule biogenesis and membrane trafficking in synapses. In response to high synaptic activity at neuromuscular junctions, stabilizes Pldn protein levels and, together with Pldn, plays a role in promoting efficient synaptic vesicle recycling and re-formation through early endosomes. In Drosophila melanogaster (Fruit fly), this protein is Biogenesis of lysosome-related organelles complex 1 subunit 1.